A 176-amino-acid chain; its full sequence is RNA pyrophosphohydrolase (176 aa).

The region spanning Gly-6 to Lys-149 is the Nudix hydrolase domain. A Nudix box motif is present at residues Gly-38–Gly-59.

The protein belongs to the Nudix hydrolase family. RppH subfamily. It depends on a divalent metal cation as a cofactor.

Its function is as follows. Accelerates the degradation of transcripts by removing pyrophosphate from the 5'-end of triphosphorylated RNA, leading to a more labile monophosphorylated state that can stimulate subsequent ribonuclease cleavage. The protein is RNA pyrophosphohydrolase of Proteus mirabilis (strain HI4320).